We begin with the raw amino-acid sequence, 55 residues long: Large ribosomal subunit protein bL33 (55 aa).

The protein belongs to the bacterial ribosomal protein bL33 family.

This Burkholderia cenocepacia (strain ATCC BAA-245 / DSM 16553 / LMG 16656 / NCTC 13227 / J2315 / CF5610) (Burkholderia cepacia (strain J2315)) protein is Large ribosomal subunit protein bL33.